A 187-amino-acid chain; its full sequence is UPF0340 protein SMU_87 (187 aa).

It belongs to the UPF0340 family.

This Streptococcus mutans serotype c (strain ATCC 700610 / UA159) protein is UPF0340 protein SMU_87.